Here is a 185-residue protein sequence, read N- to C-terminus: Elongation factor P (185 aa).

Belongs to the elongation factor P family.

The protein localises to the cytoplasm. It participates in protein biosynthesis; polypeptide chain elongation. Functionally, involved in peptide bond synthesis. Stimulates efficient translation and peptide-bond synthesis on native or reconstituted 70S ribosomes in vitro. Probably functions indirectly by altering the affinity of the ribosome for aminoacyl-tRNA, thus increasing their reactivity as acceptors for peptidyl transferase. The chain is Elongation factor P from Streptococcus equi subsp. equi (strain 4047).